The primary structure comprises 219 residues: Chloramphenicol acetyltransferase (219 aa).

The Proton acceptor role is filled by His190.

This sequence belongs to the chloramphenicol acetyltransferase family. Homotrimer.

The catalysed reaction is chloramphenicol + acetyl-CoA = chloramphenicol 3-acetate + CoA. In terms of biological role, this enzyme is an effector of chloramphenicol resistance in bacteria. In Clostridium butyricum, this protein is Chloramphenicol acetyltransferase (catB).